The following is a 321-amino-acid chain: Olfactory receptor 5K4 (321 aa).

Topologically, residues 1 to 25 are extracellular; the sequence is MARENHSLAAEFILIGFTNYPELKT. N-linked (GlcNAc...) asparagine glycosylation is present at Asn5. Residues 26–46 traverse the membrane as a helical segment; the sequence is LLFVVFSAIYLVTMVGNLGLV. Residues 47–54 are Cytoplasmic-facing; the sequence is ALIYVERR. Residues 55–75 form a helical membrane-spanning segment; that stretch reads LLTPMYIFLGNLALMDSCCSC. The Extracellular portion of the chain corresponds to 76–97; sequence AVTPKMLENFFSEDRIISLYEC. Cys97 and Cys179 are oxidised to a cystine. A helical transmembrane segment spans residues 98–118; the sequence is MAQFYFLCLAETTDCFLLATM. The Cytoplasmic segment spans residues 119 to 139; sequence AYDRYVAICHPLQYHTMMSKT. The chain crosses the membrane as a helical span at residues 140–160; that stretch reads LCIRMTTGAFKAGNLHSMIHV. Residues 161 to 205 are Extracellular-facing; the sequence is GLLLRLTFCRSNKIHHFFCDILPLYRLSCTDPSINELMIYIFSIP. Residues 206-226 form a helical membrane-spanning segment; that stretch reads IQIFTIATVLISYLCILLTVF. Over 227-240 the chain is Cytoplasmic; that stretch reads KMKSKEGRGKAFST. Residues 241–261 form a helical membrane-spanning segment; it reads CASHFLSVSIFYICLLMYIGP. At 262–268 the chain is on the extracellular side; the sequence is SEEGDKD. The helical transmembrane segment at 269–289 threads the bilayer; the sequence is TPVAIFYAIVIPLLNPFIYSL. Topologically, residues 290 to 321 are cytoplasmic; it reads RNKEVINVLKKIMRNYNILKQTCSIANLFLIY.

The protein belongs to the G-protein coupled receptor 1 family.

It is found in the cell membrane. Odorant receptor. The polypeptide is Olfactory receptor 5K4 (OR5K4) (Homo sapiens (Human)).